The sequence spans 434 residues: Enolase (434 aa).

Residues His158 and Glu167 each coordinate substrate. Residue Glu210 is the Proton donor of the active site. Positions 245, 294, and 319 each coordinate Mg(2+). Residues Glu294 and Asp319 each coordinate substrate. Lys344 (proton acceptor) is an active-site residue. Substrate contacts are provided by residues 371-374 (SHRS) and Lys395.

It belongs to the enolase family. As to quaternary structure, homodimer. It depends on Mg(2+) as a cofactor.

The protein resides in the cytoplasm. It catalyses the reaction (2R)-2-phosphoglycerate = phosphoenolpyruvate + H2O. It participates in carbohydrate degradation; glycolysis; pyruvate from D-glyceraldehyde 3-phosphate: step 4/5. This chain is Enolase, found in Caenorhabditis elegans.